Reading from the N-terminus, the 139-residue chain is Nucleoside diphosphate kinase (139 aa).

Residues Lys10, Phe58, Arg86, Thr92, Arg103, and Asn113 each contribute to the ATP site. The Pros-phosphohistidine intermediate role is filled by His116.

The protein belongs to the NDK family. Homotetramer. Requires Mg(2+) as cofactor.

It is found in the cytoplasm. It catalyses the reaction a 2'-deoxyribonucleoside 5'-diphosphate + ATP = a 2'-deoxyribonucleoside 5'-triphosphate + ADP. The enzyme catalyses a ribonucleoside 5'-diphosphate + ATP = a ribonucleoside 5'-triphosphate + ADP. Functionally, major role in the synthesis of nucleoside triphosphates other than ATP. The ATP gamma phosphate is transferred to the NDP beta phosphate via a ping-pong mechanism, using a phosphorylated active-site intermediate. This chain is Nucleoside diphosphate kinase, found in Nitratidesulfovibrio vulgaris (strain ATCC 29579 / DSM 644 / CCUG 34227 / NCIMB 8303 / VKM B-1760 / Hildenborough) (Desulfovibrio vulgaris).